A 438-amino-acid polypeptide reads, in one-letter code: Forkhead box protein J1 (438 aa).

The fork-head DNA-binding region spans 123–217 (KPPYSYATLI…MNGAMKKRRL (95 aa)).

This sequence belongs to the FOXJ1 family.

The protein resides in the nucleus. Functionally, key transcription factor required for motile ciliogenesis. Activates genes essential for motile cilia formation and function. This Xenopus tropicalis (Western clawed frog) protein is Forkhead box protein J1.